A 246-amino-acid chain; its full sequence is Uridylate kinase (246 aa).

10–13 (KLSG) contributes to the ATP binding site. Gly52 serves as a coordination point for UMP. Gly53 and Arg57 together coordinate ATP. UMP-binding positions include Asp72 and 133–140 (TGNPFFTT). ATP contacts are provided by Thr160, Tyr166, and Asp169.

The protein belongs to the UMP kinase family. As to quaternary structure, homohexamer.

The protein localises to the cytoplasm. The enzyme catalyses UMP + ATP = UDP + ADP. The protein operates within pyrimidine metabolism; CTP biosynthesis via de novo pathway; UDP from UMP (UMPK route): step 1/1. Its activity is regulated as follows. Inhibited by UTP. Its function is as follows. Catalyzes the reversible phosphorylation of UMP to UDP. The protein is Uridylate kinase of Halorhodospira halophila (strain DSM 244 / SL1) (Ectothiorhodospira halophila (strain DSM 244 / SL1)).